Here is a 326-residue protein sequence, read N- to C-terminus: MVSQTVSVAVTGGTGQIAYSFLFSLAHGDVFGLDCGIDLRIYDIPGTERALSGVRMELDDGAFPLLQRVQVTTSLHDAFDGIDAAFLIGSVPRGPGVERRDLLKKNGEIFATQGKALNTTAKRDAKIFVVGNPVNTNCWIAMNHAPRLLRKNFHAMLRLDQNRMHSMLSHRAEVPLSAVSQVVVWGNHSAKQVPDFTQALINDRPIAETIADRDWLENIMVPSVQSRGSAVIEARGKSSAASAARALAEAARSIYQPKEGEWFSSGVCSDHNPYGLPEDLIFGFPCRMLATGEYEVIPRLPWDAFIRGKMQISLDEILQEKASVSL.

12–18 lines the NAD(+) pocket; that stretch reads GGTGQIA. Substrate contacts are provided by Arg-93 and Arg-99. Residues Asn-106, Gln-113, and 130–132 contribute to the NAD(+) site; that span reads VGN. 2 residues coordinate substrate: Asn-132 and Arg-163. Residue His-188 is the Proton acceptor of the active site.

This sequence belongs to the LDH/MDH superfamily. MDH type 2 family.

It carries out the reaction (S)-malate + NAD(+) = oxaloacetate + NADH + H(+). Functionally, catalyzes the reversible oxidation of malate to oxaloacetate. The polypeptide is Malate dehydrogenase (Chlamydia trachomatis serovar A (strain ATCC VR-571B / DSM 19440 / HAR-13)).